The primary structure comprises 726 residues: Cyclin-T1 (726 aa).

Position 117 is a phosphoserine (S117). A Nuclear localization signal, and interaction with Tat-TAR RNA motif is present at residues 253-270 (KRIWNWRACEAAKKTKAD). Residue S340 is modified to Phosphoserine. A Glycyl lysine isopeptide (Lys-Gly) (interchain with G-Cter in SUMO2) cross-link involves residue K342. The segment at 360–385 (VDHSLPQDGSNAFISQKQNSKSVPSA) is disordered. Over residues 366–382 (QDGSNAFISQKQNSKSV) the composition is skewed to polar residues. Residues 384 to 425 (SAKVSLKEYRAKHAEELAAQKRQLENMEANVKSQYAYAAQNL) are a coiled coil. Residue S388 is modified to Phosphoserine. The residue at position 390 (K390) is an N6-acetyllysine. Residue K415 forms a Glycyl lysine isopeptide (Lys-Gly) (interchain with G-Cter in SUMO2) linkage. Residues S416, S474, and S475 each carry the ADP-ribosylserine modification. The tract at residues 480-550 (IKMRIKVHAA…RPGDPKHSSQ (71 aa)) is histidine-rich domain (HRD). A Glycyl lysine isopeptide (Lys-Gly) (interchain with G-Cter in SUMO2) cross-link involves residue K481. Residue K485 is modified to N6-(ADP-ribosyl)lysine. At H487 the chain carries ADP-ribosylhistidine. Residues 487–506 (HAAADKHNSVEDSVTKSREH) show a composition bias toward basic and acidic residues. 2 disordered regions span residues 487–650 (HAAA…NGHN) and 688–726 (SDYLNPRSGGISSRSGNTDKPRPPPLPSEPPPPLPPLPK). 2 positions are modified to phosphoserine: S495 and S499. Residues 507–530 (KEKHKTHPSNHHHHHNHHSHKHSH) show a composition bias toward basic residues. Residues 527-570 (KHSHSQLPVGTGNKRPGDPKHSSQTSNLAHKTYSLSSSFSSSSS) form a required for interaction with ZMYND8 region. H530 is subject to ADP-ribosylhistidine. S531, S549, and S552 each carry ADP-ribosylserine. H556 bears the ADP-ribosylhistidine mark. The segment covering 560-570 (SLSSSFSSSSS) has biased composition (low complexity). Residue S563 is modified to ADP-ribosylserine. Residues S564 and S577 each carry the phosphoserine modification. Positions 594–609 (STKSSSLNFSFPSLPT) are enriched in low complexity. A compositionally biased stretch (polar residues) spans 615–630 (GHSSDTSGLSFSQPSC). Residue S637 is modified to ADP-ribosylserine. Residues 710-726 (PPPLPSEPPPPLPPLPK) show a composition bias toward pro residues.

The protein belongs to the cyclin family. Cyclin C subfamily. Cyclin-T1 is the predominant cyclin that associates with CDK9 to form a heterodimer called P-TEFb. P-TEFb forms a complex with AFF4/AF5Q31. Component of a complex which is at least composed of HTATSF1/Tat-SF1, P-TEFb complex, RNA pol II, SUPT5H, and NCL/nucleolin. Component of the 7SK snRNP complex at least composed of P-TEFb (composed of CDK9 and CCNT1/cyclin-T1), HEXIM1, HEXIM2, BCDIN3, SART3 proteins and 7SK and U6 snRNAs. Interacts (via central region) with ZMYND8 (via N-terminus); the interaction is direct and the association appears to occur between homodimeric ZMYND8 and the activated form of the P-TEFb complex. Interacts with BRD4, targets chromatin binding. Interacts with JMJD6. Interacts with MDFIC. Interacts with HSF1. Interacts with HTATSF1. Interacts with TBX21. In terms of assembly, (Microbial infection) Interacts with the transactivation region of HIV-1, HIV-2 and SIV Tat. As to quaternary structure, (Microbial infection) Interacts with human herpes virus 1 (HHV-1) transcriptional regulator ICP22. In terms of processing, ADP-ribosylation on serine residues by PARP1 in response to DNA damage disrupts the phase separation activity of CCNT1, thereby preventing activation of CDK9. As to expression, ubiquitously expressed.

It is found in the nucleus. Functionally, regulatory subunit of the cyclin-dependent kinase pair (CDK9/cyclin-T1) complex, also called positive transcription elongation factor B (P-TEFb), which facilitates the transition from abortive to productive elongation by phosphorylating the CTD (C-terminal domain) of the large subunit of RNA polymerase II (RNA Pol II). Required to activate the protein kinase activity of CDK9: acts by mediating formation of liquid-liquid phase separation (LLPS) that enhances binding of P-TEFb to the CTD of RNA Pol II. Its function is as follows. (Microbial infection) In case of HIV or SIV infections, binds to the transactivation domain of the viral nuclear transcriptional activator, Tat, thereby increasing Tat's affinity for the transactivating response RNA element (TAR RNA). Serves as an essential cofactor for Tat, by promoting RNA Pol II activation, allowing transcription of viral genes. This Homo sapiens (Human) protein is Cyclin-T1 (CCNT1).